The primary structure comprises 240 residues: Ubiquitin domain-containing protein 2 (240 aa).

Residues 1-48 (MGGCVGSHHDSSGSLNENSDGTGVALGRNQPLKREKPKWKSDYPMTDG) form a disordered region. Polar residues predominate over residues 12 to 21 (SGSLNENSDG). The span at 32-41 (LKREKPKWKS) shows a compositional bias: basic and acidic residues. One can recognise a Ubiquitin-like domain in the interval 152–227 (CQLRLRLSTG…VQVIVSQPPT (76 aa)).

It localises to the cytoplasm. The sequence is that of Ubiquitin domain-containing protein 2 (ubtd2) from Danio rerio (Zebrafish).